The chain runs to 157 residues: Transmembrane protein 50A (157 aa).

Ser-2 is subject to N-acetylserine. Residue Ser-2 is modified to Phosphoserine. The next 4 helical transmembrane spans lie at 26-46, 58-78, 95-115, and 126-146; these read IAAG…AVIY, ACGV…NGQV, IWLF…MWIL, and IVYP…GGLV.

This sequence belongs to the UPF0220 family.

It localises to the membrane. This chain is Transmembrane protein 50A (TMEM50A), found in Homo sapiens (Human).